Reading from the N-terminus, the 334-residue chain is Chorismatase (334 aa).

Substrate-binding residues include Tyr-143, Arg-150, Tyr-203, and Arg-216. Glu-328 acts as the Proton acceptor in catalysis.

It belongs to the FkbO/Hyg5 family. As to quaternary structure, monomer.

The catalysed reaction is chorismate + H2O = (3R,4R)-3,4-dihydroxy-3,4-dihydrobenzoate + pyruvate. Its function is as follows. Involved in the biosynthesis of the macrocyclic amino acid-linked polyketides rapamycin which is a potent immunosuppressant that prevents T-cell proliferation through initial binding to the immunophilin FKBP12. Catalyzes the hydrolysis of chorismate via a 1,4-conjugate elimination of water to yield (4R,5R)-4,5-dihydroxycyclohexa-1,5-dienecarboxylic acid (DCDC). This chain is Chorismatase (rapK), found in Streptomyces rapamycinicus (strain ATCC 29253 / DSM 41530 / NRRL 5491 / AYB-994) (Streptomyces hygroscopicus (strain ATCC 29253)).